Consider the following 449-residue polypeptide: Packaging protein 1 (449 aa).

The segment at 1-77 is disordered; sequence METRGRRPAA…QPAKRGDMLD (77 aa). 171–178 contributes to the ATP binding site; the sequence is GPTGCGKS. A DNA-binding region spans residues 440 to 449; the sequence is RAYRARKTPK.

Belongs to the adenoviridae packaging protein 1 family. Homodimer. Part of a genome packaging complex composed of packaging proteins 1, 2 and 3; this complex specifically binds to the packaging sequence on the left end of viral genomic DNA and performs packaging of the viral genome. Interacts with protein 33K.

It localises to the virion. The protein resides in the host nucleus. The protein localises to the host nucleoplasm. It is found in the host nucleolus. In terms of biological role, component of the packaging machinery which encapsidates the viral DNA into preformed capsids and transcriptional activator of the viral major late promoter (MLP). Binds, along with packaging proteins 2 and 3, to the specific packaging sequence on the left end of viral genomic DNA and displays ATPase activity thereby providing the power stroke of the packaging machinery. The activity of packaging protein IVa2 is stimulated by protein 33K which acts as a terminase. May be the protein that pumps DNA into the capsid powered by ATP hydrolysis. Specifically binds to the 5'-CG-3' nucleotides of the repeats making up the packaging sequence. Component of the DEF-A and DEF-B transcription factors that bind downstream elements of the major late promoter (MLP), and stimulate transcription from the MLP after initiation of viral DNA replication. DEF-A is a heterodimer packaging proteins 1 and 2 and DEF-B is a homodimer of packaging protein 1. The chain is Packaging protein 1 from Homo sapiens (Human).